A 258-amino-acid polypeptide reads, in one-letter code: Ribonuclease PH (258 aa).

Phosphate contacts are provided by residues Arg-86 and 124 to 126 (GTR).

Belongs to the RNase PH family. In terms of assembly, homohexameric ring arranged as a trimer of dimers.

The enzyme catalyses tRNA(n+1) + phosphate = tRNA(n) + a ribonucleoside 5'-diphosphate. Its function is as follows. Phosphorolytic 3'-5' exoribonuclease that plays an important role in tRNA 3'-end maturation. Removes nucleotide residues following the 3'-CCA terminus of tRNAs; can also add nucleotides to the ends of RNA molecules by using nucleoside diphosphates as substrates, but this may not be physiologically important. Probably plays a role in initiation of 16S rRNA degradation (leading to ribosome degradation) during starvation. In Caldicellulosiruptor saccharolyticus (strain ATCC 43494 / DSM 8903 / Tp8T 6331), this protein is Ribonuclease PH.